A 381-amino-acid chain; its full sequence is Queuine tRNA-ribosyltransferase (381 aa).

The active-site Proton acceptor is aspartate 96. Residues 96-100 (DSGGF), aspartate 150, glutamine 193, and glycine 220 contribute to the substrate site. The segment at 251 to 257 (GVGSPDS) is RNA binding. The active-site Nucleophile is aspartate 270. An RNA binding; important for wobble base 34 recognition region spans residues 275-279 (TRIAR). 4 residues coordinate Zn(2+): cysteine 308, cysteine 310, cysteine 313, and histidine 339.

It belongs to the queuine tRNA-ribosyltransferase family. As to quaternary structure, homodimer. Within each dimer, one monomer is responsible for RNA recognition and catalysis, while the other monomer binds to the replacement base PreQ1. Zn(2+) serves as cofactor.

The enzyme catalyses 7-aminomethyl-7-carbaguanine + guanosine(34) in tRNA = 7-aminomethyl-7-carbaguanosine(34) in tRNA + guanine. It functions in the pathway tRNA modification; tRNA-queuosine biosynthesis. In terms of biological role, catalyzes the base-exchange of a guanine (G) residue with the queuine precursor 7-aminomethyl-7-deazaguanine (PreQ1) at position 34 (anticodon wobble position) in tRNAs with GU(N) anticodons (tRNA-Asp, -Asn, -His and -Tyr). Catalysis occurs through a double-displacement mechanism. The nucleophile active site attacks the C1' of nucleotide 34 to detach the guanine base from the RNA, forming a covalent enzyme-RNA intermediate. The proton acceptor active site deprotonates the incoming PreQ1, allowing a nucleophilic attack on the C1' of the ribose to form the product. After dissociation, two additional enzymatic reactions on the tRNA convert PreQ1 to queuine (Q), resulting in the hypermodified nucleoside queuosine (7-(((4,5-cis-dihydroxy-2-cyclopenten-1-yl)amino)methyl)-7-deazaguanosine). The sequence is that of Queuine tRNA-ribosyltransferase from Bacillus pumilus (strain SAFR-032).